A 95-amino-acid polypeptide reads, in one-letter code: Aspartyl/glutamyl-tRNA(Asn/Gln) amidotransferase subunit C (95 aa).

This sequence belongs to the GatC family. In terms of assembly, heterotrimer of A, B and C subunits.

The enzyme catalyses L-glutamyl-tRNA(Gln) + L-glutamine + ATP + H2O = L-glutaminyl-tRNA(Gln) + L-glutamate + ADP + phosphate + H(+). It catalyses the reaction L-aspartyl-tRNA(Asn) + L-glutamine + ATP + H2O = L-asparaginyl-tRNA(Asn) + L-glutamate + ADP + phosphate + 2 H(+). Functionally, allows the formation of correctly charged Asn-tRNA(Asn) or Gln-tRNA(Gln) through the transamidation of misacylated Asp-tRNA(Asn) or Glu-tRNA(Gln) in organisms which lack either or both of asparaginyl-tRNA or glutaminyl-tRNA synthetases. The reaction takes place in the presence of glutamine and ATP through an activated phospho-Asp-tRNA(Asn) or phospho-Glu-tRNA(Gln). The chain is Aspartyl/glutamyl-tRNA(Asn/Gln) amidotransferase subunit C from Rhodopseudomonas palustris (strain BisB18).